We begin with the raw amino-acid sequence, 510 residues long: ATP synthase subunit alpha (510 aa).

169–176 (GDRQTGKT) provides a ligand contact to ATP.

This sequence belongs to the ATPase alpha/beta chains family. F-type ATPases have 2 components, CF(1) - the catalytic core - and CF(0) - the membrane proton channel. CF(1) has five subunits: alpha(3), beta(3), gamma(1), delta(1), epsilon(1). CF(0) has four main subunits: a(1), b(1), b'(1) and c(9-12).

The protein resides in the cell inner membrane. It carries out the reaction ATP + H2O + 4 H(+)(in) = ADP + phosphate + 5 H(+)(out). Functionally, produces ATP from ADP in the presence of a proton gradient across the membrane. The alpha chain is a regulatory subunit. The chain is ATP synthase subunit alpha from Rhodospirillum rubrum (strain ATCC 11170 / ATH 1.1.1 / DSM 467 / LMG 4362 / NCIMB 8255 / S1).